The following is a 589-amino-acid chain: Sulfite reductase [NADPH] hemoprotein beta-component (589 aa).

C443, C449, C488, and C492 together coordinate [4Fe-4S] cluster. Siroheme is bound at residue C492.

It belongs to the nitrite and sulfite reductase 4Fe-4S domain family. In terms of assembly, alpha(8)-beta(8). The alpha component is a flavoprotein, the beta component is a hemoprotein. Siroheme is required as a cofactor. [4Fe-4S] cluster serves as cofactor.

The catalysed reaction is hydrogen sulfide + 3 NADP(+) + 3 H2O = sulfite + 3 NADPH + 4 H(+). The protein operates within sulfur metabolism; hydrogen sulfide biosynthesis; hydrogen sulfide from sulfite (NADPH route): step 1/1. Its function is as follows. Component of the sulfite reductase complex that catalyzes the 6-electron reduction of sulfite to sulfide. This is one of several activities required for the biosynthesis of L-cysteine from sulfate. This chain is Sulfite reductase [NADPH] hemoprotein beta-component, found in Neisseria meningitidis serogroup C / serotype 2a (strain ATCC 700532 / DSM 15464 / FAM18).